Consider the following 259-residue polypeptide: Glycerol-3-phosphate acyltransferase (259 aa).

7 consecutive transmembrane segments (helical) span residues 11–31 (IILA…IIIV), 62–82 (LVVA…AILL), 93–112 (TSYF…PIYY), 124–144 (LGLL…VWFI), 152–172 (VSVA…IPYL), 188–208 (FSVA…HYWF), and 211–231 (IWAS…LILG).

It belongs to the PlsY family. As to quaternary structure, probably interacts with PlsX.

The protein resides in the cell membrane. The enzyme catalyses an acyl phosphate + sn-glycerol 3-phosphate = a 1-acyl-sn-glycero-3-phosphate + phosphate. It participates in lipid metabolism; phospholipid metabolism. Its function is as follows. Catalyzes the transfer of an acyl group from acyl-phosphate (acyl-PO(4)) to glycerol-3-phosphate (G3P) to form lysophosphatidic acid (LPA). This enzyme utilizes acyl-phosphate as fatty acyl donor, but not acyl-CoA or acyl-ACP. The protein is Glycerol-3-phosphate acyltransferase of Mycoplasma capricolum subsp. capricolum (strain California kid / ATCC 27343 / NCTC 10154).